We begin with the raw amino-acid sequence, 107 residues long: MQFSTTPTLEGLTIVEYCGVVTGEAILGANIFRDFFAGIRDIVGGRSGAYEKELRKAREIAFEELGSQARALGADAVVGIDIDYETVGQNGSMLMVSVSGTAVKTRR.

The protein belongs to the UPF0145 family.

The protein is UPF0145 protein YbjQ of Shigella flexneri.